Consider the following 220-residue polypeptide: Iron-sulfur cluster repair protein YtfE (220 aa).

It belongs to the RIC family. YtfE subfamily. In terms of assembly, homodimer.

Its subcellular location is the cytoplasm. Di-iron-containing protein involved in the repair of iron-sulfur clusters damaged by oxidative and nitrosative stress conditions. This is Iron-sulfur cluster repair protein YtfE from Escherichia coli (strain SMS-3-5 / SECEC).